The following is a 161-amino-acid chain: Large ribosomal subunit protein uL15 (161 aa).

Residues 1-43 (MKLSEIADNVGSRKKRMRIGRGIGSGKGKTGGRGGKGQTARSG) are disordered. Residues 21-37 (RGIGSGKGKTGGRGGKG) are compositionally biased toward gly residues.

In terms of assembly, part of the 50S ribosomal subunit.

Binds to the 23S rRNA. This is Large ribosomal subunit protein uL15 from Rhodopseudomonas palustris (strain ATCC BAA-98 / CGA009).